Consider the following 324-residue polypeptide: MNKIVLYLLVYGATLGAAYDLLKAPSYFEEFLHKFNKNYSSESEKLRRFKIFQHNLEEIINKNQNDTSAQYEINKFSDLSKDETISKYTGLSLPLQKQNFCEVVVLDRPPDKGPLEFDWRRLNKVTSVKNQGMCGACWAFATLGSLESQFAIKHDQLINLSEQQLIDCDFVDVGCDGGLLHTAYEAVMNMGGIQAENDYPYEANNGPCRVNAAKFVVRVKKCYRYVTLFEEKLKDLLRIVGPIPVAIDASDIVGYKRGIIRYCENHGLNHAVLLVGYGVENGIPFWILKNTWGADWGEQGYFRVQQNINACGIKNELPSSAEIY.

The N-terminal stretch at 1–16 (MNKIVLYLLVYGATLG) is a signal peptide. Residues 17–113 (AAYDLLKAPS…VVLDRPPDKG (97 aa)) constitute a propeptide, activation peptide. 3 disulfides stabilise this stretch: Cys-134-Cys-175, Cys-168-Cys-208, and Cys-263-Cys-311. Cys-137 is an active-site residue. Asn-159 carries N-linked (GlcNAc...) asparagine; by host glycosylation. Active-site residues include His-270 and Asn-290.

This sequence belongs to the peptidase C1 family. In terms of processing, synthesized as an inactive proenzyme and activated by proteolytic removal of the inhibitory propeptide.

It catalyses the reaction Endopeptidase of broad specificity, hydrolyzing substrates of both cathepsin L and cathepsin B.. Cysteine protease that plays an essential role in host liquefaction to facilitate horizontal transmission of the virus. May participate in the degradation of foreign protein expressed by the baculovirus system. This Antheraea pernyi nuclear polyhedrosis virus (ApNPV) protein is Viral cathepsin (VCATH).